Consider the following 342-residue polypeptide: Replication factor C subunit 4 (342 aa).

ATP is bound by residues V24, V36, 61–68 (GMPGIGKT), N157, and R215.

The protein belongs to the activator 1 small subunits family. As to quaternary structure, heteropentamer of subunits rfc1, rfc2, rfc3, rfc4 and rfc5 that forms a complex (RFC) with PCNA in the presence of ATP. Two other complexes exist where rfc1 can be replaced by either ctf18 or elg1 to form the ctf18-RFC or the elg1-RFC complexes respectively.

The protein localises to the nucleus. Functionally, the elongation of primed DNA templates by DNA polymerase delta and epsilon requires the action of the accessory proteins PCNA and activator 1. This is Replication factor C subunit 4 (rfc4) from Schizosaccharomyces pombe (strain 972 / ATCC 24843) (Fission yeast).